The chain runs to 455 residues: Branchpoint-bridging protein (455 aa).

Disordered regions lie at residues 1-28 (MSNR…PKRY), 86-110 (ETDH…TNTR), 189-210 (IRGK…SQTG), and 305-455 (RDCK…NVPR). The region spanning 153–236 (YVPVKDYPDI…LKISKAVKLV (84 aa)) is the KH domain. The segment at 292–309 (IVCKICGNIGHIARDCKQ) adopts a CCHC-type zinc-finger fold. Composition is skewed to pro residues over residues 335–348 (VPPP…PAPP), 358–370 (VPPP…PPAP), and 388–402 (VPPP…PPPV). Positions 426–442 (SSELKNTGESSSSSSGV) are enriched in low complexity. A compositionally biased stretch (pro residues) spans 443 to 455 (PPSPPPPSSNVPR).

The protein belongs to the BBP/SF1 family.

It localises to the nucleus. In terms of biological role, necessary for the splicing of pre-mRNA. Has a role in the recognition of the branch site (5'-UACUAAC-3'), the pyrimidine tract and the 3'-splice site at the 3'-end of introns. This chain is Branchpoint-bridging protein (BBP), found in Candida albicans (strain SC5314 / ATCC MYA-2876) (Yeast).